Here is a 367-residue protein sequence, read N- to C-terminus: Tetraprenyl-beta-curcumene synthase (367 aa).

This sequence belongs to the large terpene synthase family.

It carries out the reaction all-trans-heptaprenyl diphosphate = (R)-tetraprenyl-beta-curcumene + diphosphate. In terms of biological role, catalyzes the transformation of a linear C35 prenyl diphosphate chain to form tetraprenyl-beta-curcumene. This is Tetraprenyl-beta-curcumene synthase (ytpB) from Bacillus subtilis (strain 168).